A 509-amino-acid chain; its full sequence is Citrinin biosynthesis transcriptional activator mrl3 (509 aa).

Residues 1 to 22 (MASTAHRQPSRPTTRQRQRTGR) are disordered. The zn(2)-C6 fungal-type DNA-binding region spans 24-51 (CEECRRRKLRCDGQQPRCGVCVDSGVTC). A disordered region spans residues 97-143 (STPLTNDHHDGCSVSSASSRSDSNPPPTVSEPDMSLPNTTTSVSSAP). Over residues 109-119 (SVSSASSRSDS) the composition is skewed to low complexity. Residues 132 to 143 (LPNTTTSVSSAP) show a composition bias toward polar residues.

The protein localises to the nucleus. Functionally, transcription factor that regulates the expression of the gene cluster that mediates the biosynthesis of the mycotoxin citrinin, a hepato-nephrotoxic compound to humans due to inhibition of respiration complex III. The polypeptide is Citrinin biosynthesis transcriptional activator mrl3 (Monascus ruber (Mold)).